Here is an 85-residue protein sequence, read N- to C-terminus: U4-theraphotoxin-Hhn1o (85 aa).

A signal peptide spans Met-1–Ala-22. Residues Glu-23–Arg-48 constitute a propeptide that is removed on maturation. Cystine bridges form between Cys-52–Cys-66, Cys-56–Cys-77, and Cys-71–Cys-82.

The protein belongs to the neurotoxin 12 (Hwtx-2) family. 02 (Hwtx-2) subfamily. In terms of tissue distribution, expressed by the venom gland.

Its subcellular location is the secreted. Postsynaptic neurotoxin. This is U4-theraphotoxin-Hhn1o from Cyriopagopus hainanus (Chinese bird spider).